A 288-amino-acid polypeptide reads, in one-letter code: Thymidylate synthase (288 aa).

Position 21 (arginine 21) interacts with dUMP. Histidine 51 contributes to the (6R)-5,10-methylene-5,6,7,8-tetrahydrofolate binding site. Residue 150 to 151 (RR) participates in dUMP binding. Cysteine 170 functions as the Nucleophile in the catalytic mechanism. DUMP contacts are provided by residues 190–193 (RSGD), asparagine 201, and 231–233 (HIY). Residue aspartate 193 participates in (6R)-5,10-methylene-5,6,7,8-tetrahydrofolate binding. Position 287 (alanine 287) interacts with (6R)-5,10-methylene-5,6,7,8-tetrahydrofolate.

Belongs to the thymidylate synthase family. Bacterial-type ThyA subfamily. Homodimer.

The protein localises to the cytoplasm. It carries out the reaction dUMP + (6R)-5,10-methylene-5,6,7,8-tetrahydrofolate = 7,8-dihydrofolate + dTMP. It participates in pyrimidine metabolism; dTTP biosynthesis. In terms of biological role, catalyzes the reductive methylation of 2'-deoxyuridine-5'-monophosphate (dUMP) to 2'-deoxythymidine-5'-monophosphate (dTMP) while utilizing 5,10-methylenetetrahydrofolate (mTHF) as the methyl donor and reductant in the reaction, yielding dihydrofolate (DHF) as a by-product. This enzymatic reaction provides an intracellular de novo source of dTMP, an essential precursor for DNA biosynthesis. This chain is Thymidylate synthase, found in Mycoplasma mobile (strain ATCC 43663 / 163K / NCTC 11711) (Mesomycoplasma mobile).